The sequence spans 189 residues: Receptor activity-modifying protein 2 (189 aa).

An N-terminal signal peptide occupies residues 1-44; that stretch reads MAPLRVERAPGGSRLGVTRAQRPTALCLPPLLLLLLLLLGAVSA. Topologically, residues 45 to 157 are extracellular; the sequence is SPESLNQSLP…VQPTFSDPPE (113 aa). The segment covering 49–61 has biased composition (polar residues); the sequence is LNQSLPESQNQSH. The disordered stretch occupies residues 49-69; the sequence is LNQSLPESQNQSHPTEDSLVS. 4 N-linked (GlcNAc...) asparagine glycosylation sites follow: Asn50, Asn58, Asn99, and Asn144. 2 disulfide bridges follow: Cys83–Cys113 and Cys98–Cys145. A helical transmembrane segment spans residues 158 to 179; sequence DVLLAMIIAPICLIPFLVTLVV. The Cytoplasmic portion of the chain corresponds to 180 to 189; it reads WRSKDSDAQA.

The protein belongs to the RAMP family. In terms of assembly, heterodimer of CALCRL and RAMP2; the interaction forms the receptor complex for adrenomedullin/ADM. Heterodimer of CALCR and RAMP2; interaction forms the AMYR2 receptor complex for calcitonin/CALC and amylin/IAPP. Ubiquitous. Expressed predominantly in embryonic brain, lung and gut and in adult heart, lung, skeletal muscle and brain.

The protein resides in the cell membrane. Accessory protein that interacts with and modulates the function of G-protein coupled receptors including calcitonin gene-related peptide type 1 receptor (CALCRL) and calcitonin receptor (CALCR). Required for the transport of CALCRL to the plasma membrane. Together with CALCRL, form a receptor complex for adrenomedullin/ADM. Together with CALCR, act as a receptor complex for calcitonin/CT/CALC. Together with CALCR, also act as a receptor complex for amylin/IAPP. The sequence is that of Receptor activity-modifying protein 2 from Mus musculus (Mouse).